The chain runs to 211 residues: tRNA (guanine-N(7)-)-methyltransferase (211 aa).

4 residues coordinate S-adenosyl-L-methionine: Glu-43, Asp-68, Asn-95, and Asn-117. Substrate contacts are provided by residues Lys-121, Asp-153, and 190–193 (TEYE).

Belongs to the class I-like SAM-binding methyltransferase superfamily. TrmB family.

It carries out the reaction guanosine(46) in tRNA + S-adenosyl-L-methionine = N(7)-methylguanosine(46) in tRNA + S-adenosyl-L-homocysteine. It functions in the pathway tRNA modification; N(7)-methylguanine-tRNA biosynthesis. Its function is as follows. Catalyzes the formation of N(7)-methylguanine at position 46 (m7G46) in tRNA. The polypeptide is tRNA (guanine-N(7)-)-methyltransferase (Clostridium kluyveri (strain ATCC 8527 / DSM 555 / NBRC 12016 / NCIMB 10680 / K1)).